The chain runs to 1131 residues: Translation initiation factor IF-2 (1131 aa).

Positions 49-542 (KFKGSVSSNE…AFIMPKPQQS (494 aa)) are disordered. The segment covering 60–75 (KSIDNGKASRVEKPEK) has biased composition (basic and acidic residues). Polar residues-rich tracts occupy residues 76–88 (NNSVTAKADQTPS) and 108–125 (SEQNVTTGSTESEDNIQS). Residues 127 to 138 (GDRKYQHTDRRP) are compositionally biased toward basic and acidic residues. The span at 139-152 (QGNNGEGPQTSTNS) shows a compositional bias: polar residues. Composition is skewed to basic and acidic residues over residues 164-180 (GDRRPQGQNSGDRRPYN) and 223-239 (GDRRPQGQNSGDRRPYN). Positions 411–436 (GQGGYGGRPQGQGSYGGRPQGQGGYA) are enriched in gly residues. Composition is skewed to basic and acidic residues over residues 450–479 (KDFDKDKDSGYTRSFDKKRTDPKSGEKSSI) and 487–530 (LTKE…DPNR). Residues 632 to 801 (KRPPVVCVMG…ILTAEMGELK (170 aa)) form the tr-type G domain. Residues 641–648 (GHVDHGKT) form a G1 region. Position 641-648 (641-648 (GHVDHGKT)) interacts with GTP. The tract at residues 666–670 (GITQH) is G2. The segment at 687 to 690 (DTPG) is G3. GTP contacts are provided by residues 687-691 (DTPGH) and 741-744 (NKID). The tract at residues 741–744 (NKID) is G4. Positions 777–779 (SAH) are G5.

This sequence belongs to the TRAFAC class translation factor GTPase superfamily. Classic translation factor GTPase family. IF-2 subfamily.

Its subcellular location is the cytoplasm. Its function is as follows. One of the essential components for the initiation of protein synthesis. Protects formylmethionyl-tRNA from spontaneous hydrolysis and promotes its binding to the 30S ribosomal subunits. Also involved in the hydrolysis of GTP during the formation of the 70S ribosomal complex. The polypeptide is Translation initiation factor IF-2 (Lachnoclostridium phytofermentans (strain ATCC 700394 / DSM 18823 / ISDg) (Clostridium phytofermentans)).